The following is a 257-amino-acid chain: Zinc uptake system ATP-binding protein ZurA (257 aa).

The 237-residue stretch at 5 to 241 (IEVNNVSYHY…ADRELEILAE (237 aa)) folds into the ABC transporter domain. 37–44 (GPNGSGKS) contributes to the ATP binding site.

It belongs to the ABC transporter superfamily.

Its function is as follows. Involved in a zinc uptake transport system. The polypeptide is Zinc uptake system ATP-binding protein ZurA (zurA) (Listeria innocua serovar 6a (strain ATCC BAA-680 / CLIP 11262)).